The sequence spans 463 residues: Asparagine--tRNA ligase (463 aa).

This sequence belongs to the class-II aminoacyl-tRNA synthetase family. Homodimer.

It localises to the cytoplasm. The catalysed reaction is tRNA(Asn) + L-asparagine + ATP = L-asparaginyl-tRNA(Asn) + AMP + diphosphate + H(+). This chain is Asparagine--tRNA ligase, found in Clostridium botulinum (strain Langeland / NCTC 10281 / Type F).